A 187-amino-acid chain; its full sequence is Troponin I, slow skeletal muscle (187 aa).

P2 is modified (N-acetylproline). The tract at residues P2–R48 is involved in binding TNC. S58 is subject to Phosphoserine. Residues L97 to V118 are involved in binding TNC and actin.

This sequence belongs to the troponin I family. In terms of assembly, binds to actin and tropomyosin. In terms of tissue distribution, highest levels observed in human skeletal muscle (e.g. gastrocnemious muscle), differentiated cultures of primary human muscle cells and rhabdomyosarcoma cells cultured in low serum medium. Expressed in C2 muscle cell myoblasts and myotubes.

In terms of biological role, troponin I is the inhibitory subunit of troponin, the thin filament regulatory complex which confers calcium-sensitivity to striated muscle actomyosin ATPase activity. This Homo sapiens (Human) protein is Troponin I, slow skeletal muscle (TNNI1).